The following is a 344-amino-acid chain: Anthranilate phosphoribosyltransferase (344 aa).

Residues glycine 80, 83–84, threonine 88, 90–93, 108–116, and serine 120 contribute to the 5-phospho-alpha-D-ribose 1-diphosphate site; these read GD, NVST, and KHGNRSVSS. Glycine 80 serves as a coordination point for anthranilate. Serine 92 provides a ligand contact to Mg(2+). Position 111 (asparagine 111) interacts with anthranilate. Arginine 166 is an anthranilate binding site. Residues aspartate 225 and glutamate 226 each coordinate Mg(2+).

This sequence belongs to the anthranilate phosphoribosyltransferase family. In terms of assembly, homodimer. The cofactor is Mg(2+).

The enzyme catalyses N-(5-phospho-beta-D-ribosyl)anthranilate + diphosphate = 5-phospho-alpha-D-ribose 1-diphosphate + anthranilate. It participates in amino-acid biosynthesis; L-tryptophan biosynthesis; L-tryptophan from chorismate: step 2/5. Catalyzes the transfer of the phosphoribosyl group of 5-phosphorylribose-1-pyrophosphate (PRPP) to anthranilate to yield N-(5'-phosphoribosyl)-anthranilate (PRA). The polypeptide is Anthranilate phosphoribosyltransferase (Legionella pneumophila (strain Corby)).